The primary structure comprises 136 residues: Large-conductance mechanosensitive channel (136 aa).

A run of 3 helical transmembrane segments spans residues 15-35 (IDLA…NSIV), 38-58 (IFMP…MFIQ), and 80-100 (GHFI…FFFV).

It belongs to the MscL family. As to quaternary structure, homopentamer.

It is found in the cell inner membrane. Its function is as follows. Channel that opens in response to stretch forces in the membrane lipid bilayer. May participate in the regulation of osmotic pressure changes within the cell. The sequence is that of Large-conductance mechanosensitive channel from Bartonella tribocorum (strain CIP 105476 / IBS 506).